A 349-amino-acid polypeptide reads, in one-letter code: Cyclic amide hydrolase (349 aa).

Positions 1-90 (MTSPEDTAGV…AVFVDDPASS (90 aa)) are RU A. R38 is a binding site for substrate. An RU B region spans residues 99 to 231 (GLSIGVTTTA…AAVLVMGNSP (133 aa)). The active site involves K149. Substrate contacts are provided by residues R176, 214-215 (SA), K311, and 330-331 (SG). S214 (nucleophile) is an active-site residue. Residues 237 to 349 (YRIGHGVLRD…GGGTVAVIAR (113 aa)) are RU C.

Belongs to the cyclic amide hydrolase (CyAH) family. Homotetramer.

Cyclic amide hydrolase of unknown substrate specificity. Catalyzes the hydrolytic ring-opening of a cyclic amide. Does not act on cyanuric acid nor barbituric acid. The chain is Cyclic amide hydrolase from Rhodococcus sp.